The following is a 218-amino-acid chain: Serine/threonine-protein phosphatase 1 (218 aa).

Positions 24, 26, 53, and 79 each coordinate Mn(2+). The active-site Proton donor is the H80. H187 is a binding site for Mn(2+).

It belongs to the PPP phosphatase family. PP-1 subfamily. It depends on Mn(2+) as a cofactor.

The enzyme catalyses O-phospho-L-seryl-[protein] + H2O = L-seryl-[protein] + phosphate. It catalyses the reaction O-phospho-L-threonyl-[protein] + H2O = L-threonyl-[protein] + phosphate. Its function is as follows. Plays a key role in signaling protein misfolding via the CpxR/CPXA transducing system. It also modulates the phosphorylated status of many phosphoproteins in E.coli, some of which acting as major chaperones. Has been shown, in vitro, to act on Ser, Thr and Tyr-phosphorylated substrates. The chain is Serine/threonine-protein phosphatase 1 (pphA) from Escherichia coli (strain K12).